Here is a 122-residue protein sequence, read N- to C-terminus: Small ribosomal subunit protein uS13 (122 aa).

Residues proline 97 to lysine 122 form a disordered region. The segment covering glutamine 101–lysine 122 has biased composition (basic residues).

The protein belongs to the universal ribosomal protein uS13 family. Part of the 30S ribosomal subunit. Forms a loose heterodimer with protein S19. Forms two bridges to the 50S subunit in the 70S ribosome.

Its function is as follows. Located at the top of the head of the 30S subunit, it contacts several helices of the 16S rRNA. In the 70S ribosome it contacts the 23S rRNA (bridge B1a) and protein L5 of the 50S subunit (bridge B1b), connecting the 2 subunits; these bridges are implicated in subunit movement. Contacts the tRNAs in the A and P-sites. This Caldanaerobacter subterraneus subsp. tengcongensis (strain DSM 15242 / JCM 11007 / NBRC 100824 / MB4) (Thermoanaerobacter tengcongensis) protein is Small ribosomal subunit protein uS13.